The following is a 321-amino-acid chain: AA9 family lytic polysaccharide monooxygenase D (321 aa).

The first 21 residues, 1 to 21 (MRSTIVATFAAGLVVASLVAA), serve as a signal peptide directing secretion. Histidine 22 lines the Cu(2+) pocket. 2 disulfides stabilise this stretch: cysteine 75/cysteine 192 and cysteine 116/cysteine 120. N-linked (GlcNAc...) asparagine glycosylation occurs at asparagine 78. A Cu(2+)-binding site is contributed by histidine 105. Asparagine 152 carries an N-linked (GlcNAc...) asparagine glycan. Positions 178 and 187 each coordinate O2. A Cu(2+)-binding site is contributed by tyrosine 189. An N-linked (GlcNAc...) asparagine glycan is attached at asparagine 266.

The protein belongs to the polysaccharide monooxygenase AA9 family. Cu(2+) is required as a cofactor.

The protein localises to the secreted. The enzyme catalyses [(1-&gt;4)-beta-D-glucosyl]n+m + reduced acceptor + O2 = 4-dehydro-beta-D-glucosyl-[(1-&gt;4)-beta-D-glucosyl]n-1 + [(1-&gt;4)-beta-D-glucosyl]m + acceptor + H2O.. Lytic polysaccharide monooxygenase (LPMO) that depolymerizes crystalline and amorphous polysaccharides via the oxidation of scissile alpha- or beta-(1-4)-glycosidic bonds, yielding C1 or C4 oxidation products. Catalysis by LPMOs requires the reduction of the active-site copper from Cu(II) to Cu(I) by a reducing agent and H(2)O(2) or O(2) as a cosubstrate. This is AA9 family lytic polysaccharide monooxygenase D from Geotrichum candidum (Oospora lactis).